The sequence spans 182 residues: Ribosome-recycling factor (182 aa).

This sequence belongs to the RRF family.

Its subcellular location is the cytoplasm. In terms of biological role, responsible for the release of ribosomes from messenger RNA at the termination of protein biosynthesis. May increase the efficiency of translation by recycling ribosomes from one round of translation to another. This chain is Ribosome-recycling factor, found in Prochlorococcus marinus (strain SARG / CCMP1375 / SS120).